Reading from the N-terminus, the 502-residue chain is MADKADKMKARLPRGFVDRVPDDLRAAEKMMATIREVYDLYGFEPVETPLVEYTDALGKFLPDQDRPNEGVFSFQDDDEQWLSLRYDLTAPLARYVAENFETLPKPYRSYRNGWVFRNEKPGPGRFRQFMQFDADTVGAPNVSADAEMCMMMADALERLGIQRGDYAIRVNNRKVLDGVLDAIGLEGEGNAAKRLNVLRAIDKLDKFGPEGVRLLLGKGRLDESGDFTKGAQLPEAAIEKVLAFTAAGGADGAQTIANLQAVVAGNAKGEEGVQELADMQALFFAGGYEGRVKIDPSVVRGLEYYTGPVFEAELLFDVTNEDGQKVVFGSVGGGGRYDGLVSRFRGEPVPATGFSIGVSRLMTALKNLGKLDVSDTVGPVVVLVMDKDTQNLGRYQKMVSDLRKAGIRAEMYVGGSGMKAQMKYADRRAAPCVVIQGSQEREAGEVQIKDLVEGKRLSAEIEDNVTWRESRPAQITVREDGLVDAVREILDAQARDRAEQSK.

Belongs to the class-II aminoacyl-tRNA synthetase family. Homodimer.

It localises to the cytoplasm. The catalysed reaction is tRNA(His) + L-histidine + ATP = L-histidyl-tRNA(His) + AMP + diphosphate + H(+). In Brucella ovis (strain ATCC 25840 / 63/290 / NCTC 10512), this protein is Histidine--tRNA ligase.